Here is a 413-residue protein sequence, read N- to C-terminus: MQSVRQTVLFESEEAWRAGAEQNATAITVHARGGEVVQTRRTWAAAGGPRVRVTWSGGRTVSEVSPQLAAGLSVYVEGGAHVSRDFVQARGQAVFHSAQLELDAVRAWWPRELAVQPEALRWAECAYDIELGRQVRVDEYCALRAGETVALTAAAGGTDEAKVETGVFYPEISDGADVSLSGFRCTWLRDGSGRTDTCQKTLLMYKPAHVHMPEPAVGIELVQPVTLHPVIEVDLSSVSASGPACAHHVFLQLPAQLFVDKFQQPPELLFGEDDLELPEYKVEAWGSEVIYALEPGRVNRVQLHSRYARPGPGRRYEVVPLRPYVFEACDTGSADIAENPFYSKGMGFEAYFTADTVFKHRNSTRLNIPVPRGNSNDFPSIQYVTVLSILFSVLYISYCLFRRPVAASARASG.

The Lumenal portion of the chain corresponds to 1-378 (MQSVRQTVLF…PVPRGNSNDF (378 aa)). A glycan (N-linked (GlcNAc...) asparagine) is linked at N362. Residues 379-401 (PSIQYVTVLSILFSVLYISYCLF) form a helical membrane-spanning segment. Over 402–413 (RRPVAASARASG) the chain is Cytoplasmic.

Belongs to the PIGX family.

The protein resides in the endoplasmic reticulum membrane. It participates in glycolipid biosynthesis; glycosylphosphatidylinositol-anchor biosynthesis. In terms of biological role, required for proper folding and/or the stability of a subset of proteins in the endoplasmic reticulum. Component of glycosylphosphatidylinositol-mannosyltransferase 1 which transfers the first of the 4 mannoses in the GPI-anchor precursors during GPI-anchor biosynthesis. Probably acts by stabilizing the mannosyltransferase GPI14. This chain is Protein PBN1 (PBN1), found in Eremothecium gossypii (strain ATCC 10895 / CBS 109.51 / FGSC 9923 / NRRL Y-1056) (Yeast).